A 737-amino-acid chain; its full sequence is MPDHDSTALLSRQTKRRRVDIGVKRTVGTASAFFAKARATFFSAMNPQGSEQDVEYSVVQHADGEKSNVLRKLLKRANSYEDAMMPFPGATIISQLLKNNMNKNGGTEPSFQASGLSSTGSEVHQEDICSNSSRDSPPECLSPFGRPTMSQFDVDRLCDEHLRAKRARVENIIRGMSHSPSVALRGNENEREMAPQSVSPRESYRENKRKQKLPQQQQQSFQQLVSARKEQKREERRQLKQQLEDMQKQLRQLQEKFYQVYDSTDSENDEDGDLSEDSMRSEILDARAQDSVGRSDNEMCELDPGQFIDRARALIREQEMAENKPKREGSNKERDHGPNSLQPEGKHLAETLKQELNTAMSQVVDTVVKVFSAKPSRQVPQVFPPLQIPQARFAVNGENHNFHTANQRLQCFGDVIIPNPLDTFGSVQMPSSTDQTEALPLVVRKNSSEQSASGPATGGHHQPLHQSPLSATAGFTTPSFRHPFPLPLMAYPFQSPLGAPSGSFSGKDRASPESLDLTRDTTSLRTKMSSHHLSHHPCSPAHPPSTAEGLSLSLIKSECGDLQDMSDISPYSGSAMQEGLSPNHLKKAKLMFFYTRYPSSNMLKTYFSDVKFNRCITSQLIKWFSNFREFYYIQMEKYARQAINDGVTSTEELSITRDCELYRALNMHYNKANDFEVPERFLEVAQITLREFFNAIIAGKDVDPSWKKAIYKVICKLDSEVPEIFKSPNCLQELLHE.

An interaction with RORG region spans residues 1–28; the sequence is MPDHDSTALLSRQTKRRRVDIGVKRTVG. Positions 103–135 are enriched in polar residues; that stretch reads KNGGTEPSFQASGLSSTGSEVHQEDICSNSSRD. The tract at residues 103 to 147 is disordered; sequence KNGGTEPSFQASGLSSTGSEVHQEDICSNSSRDSPPECLSPFGRP. Residues Ser177, Ser179, Ser199, Ser291, and Ser295 each carry the phosphoserine modification. Residues 178-221 are disordered; it reads HSPSVALRGNENEREMAPQSVSPRESYRENKRKQKLPQQQQQSF. A compositionally biased stretch (basic and acidic residues) spans 320–337; the sequence is MAENKPKREGSNKERDHG. 2 disordered regions span residues 320 to 344 and 444 to 476; these read MAEN…LQPE and RKNS…AGFT. Residue Lys324 forms a Glycyl lysine isopeptide (Lys-Gly) (interchain with G-Cter in SUMO2) linkage. A compositionally biased stretch (polar residues) spans 464–476; the sequence is LHQSPLSATAGFT. A phosphoserine mark is found at Ser511 and Ser514. Positions 525–547 are disordered; it reads RTKMSSHHLSHHPCSPAHPPSTA. A Phosphoserine modification is found at Ser557. The Prospero-type homeo domain maps to 577–635; it reads QEGLSPNHLKKAKLMFFYTRYPSSNMLKTYFSDVKFNRCITSQLIKWFSNFREFYYIQM. Residues 577-735 are homeo-Prospero; sequence QEGLSPNHLK…KSPNCLQELL (159 aa). Positions 636–735 constitute a Prospero domain; the sequence is EKYARQAIND…KSPNCLQELL (100 aa). The tract at residues 723–729 is essential for nuclear localization, interaction with RORG, repression of RORG transcriptional activator activity; sequence EIFKSPN.

It belongs to the Prospero homeodomain family. As to quaternary structure, interacts with RORA and RORG (via AF-2 motif). Expressed in the young neurons of the subventricular region of the CNS, developing eye lens and pancreas. It is also found in the developing liver, heart and skeletal muscle. In the eye, expressed in the lens and retina at postnatal day 10. In the retina, localized to the inner nuclear layer. In the lens, localized to epithelial and fiber cells.

Its subcellular location is the nucleus. Its function is as follows. Transcription factor involved in developmental processes such as cell fate determination, gene transcriptional regulation and progenitor cell regulation in a number of organs. Plays a critical role in embryonic development and functions as a key regulatory protein in neurogenesis and the development of the heart, eye lens, liver, pancreas and the lymphatic system. Involved in the regulation of the circadian rhythm. Represses: transcription of the retinoid-related orphan receptor RORG, transcriptional activator activity of RORA and RORG and the expression of RORA/G-target genes including core clock components: BMAL1, NPAS2 and CRY1 and metabolic genes: AVPR1A and ELOVL3. The protein is Prospero homeobox protein 1 (Prox1) of Mus musculus (Mouse).